The chain runs to 402 residues: B3 domain-containing protein LFL1 (402 aa).

The tract at residues 1–174 is disordered; it reads MRGEERWQEQ…AAPRPSSHHT (174 aa). Over residues 74–87 the composition is skewed to low complexity; the sequence is ARPPTLAASAAAAS. A compositionally biased stretch (pro residues) spans 88–102; sequence SPPPPPPPPIPPLPP. Low complexity-rich tracts occupy residues 103–139 and 156–169; these read STSTSAARPTDMAGVTSKRRSSSASTSSSSGDGAAVS and PRPAASLRPAAPRP. The TF-B3 DNA-binding region spans 181 to 284; sequence LQKELRYSDV…RFVIGAKKAG (104 aa). The disordered stretch occupies residues 381–402; it reads LHVTDDKSGHSLIPNPKSGPHM.

As to expression, expressed in anthers, pollen grains and young developing embryos.

Its subcellular location is the nucleus. In terms of biological role, transcription repressor involved in flowering time regulation. Represses the flowering activator EHD1 by binding specifically to the DNA sequence 5'-CATGCATG-3 of its promoter. In Oryza sativa subsp. japonica (Rice), this protein is B3 domain-containing protein LFL1 (LFL1).